The sequence spans 956 residues: Protein translocase subunit SecA (956 aa).

ATP contacts are provided by residues glutamine 87, 105-109 (GEGKT), and aspartate 524. Cysteine 940, cysteine 942, cysteine 951, and histidine 952 together coordinate Zn(2+).

This sequence belongs to the SecA family. As to quaternary structure, monomer and homodimer. Part of the essential Sec protein translocation apparatus which comprises SecA, SecYEG and auxiliary proteins SecDF-YajC and YidC. Zn(2+) serves as cofactor.

It localises to the cell inner membrane. It is found in the cytoplasm. It carries out the reaction ATP + H2O + cellular proteinSide 1 = ADP + phosphate + cellular proteinSide 2.. Part of the Sec protein translocase complex. Interacts with the SecYEG preprotein conducting channel. Has a central role in coupling the hydrolysis of ATP to the transfer of proteins into and across the cell membrane, serving both as a receptor for the preprotein-SecB complex and as an ATP-driven molecular motor driving the stepwise translocation of polypeptide chains across the membrane. The protein is Protein translocase subunit SecA of Beijerinckia indica subsp. indica (strain ATCC 9039 / DSM 1715 / NCIMB 8712).